Here is a 270-residue protein sequence, read N- to C-terminus: Large ribosomal subunit protein uL30 (270 aa).

An N-acetylmethionine modification is found at M1. Tandem repeats lie at residues 7 to 18 (KKKKVATVPGTL), 19 to 29 (KKKVPAGPKTL), 30 to 40 (KKKVPAVPETL), 41 to 52 (KKKRRNFAELKV), 53 to 64 (KRLRKKFALKTL), and 65 to 76 (RKARRKLIYEKA). The segment at 7-76 (KKKKVATVPG…ARRKLIYEKA (70 aa)) is 6 X 12 AA tandem repeats. A Phosphothreonine modification is found at T39. K146 is modified (N6-acetyllysine). An N6-succinyllysine modification is found at K149. Y161 is modified (phosphotyrosine).

This sequence belongs to the universal ribosomal protein uL30 family. Component of the large ribosomal subunit. Homodimer. Interacts with DHX33.

It localises to the cytoplasm. Its function is as follows. Component of the large ribosomal subunit. The ribosome is a large ribonucleoprotein complex responsible for the synthesis of proteins in the cell. Binds to G-rich structures in 28S rRNA and in mRNAs. Plays a regulatory role in the translation apparatus; inhibits cell-free translation of mRNAs. In Mus musculus (Mouse), this protein is Large ribosomal subunit protein uL30 (Rpl7).